We begin with the raw amino-acid sequence, 423 residues long: Serine--tRNA ligase (423 aa).

229 to 231 (TAE) is a binding site for L-serine. 258–260 (RRE) lines the ATP pocket. Glu281 is a binding site for L-serine. ATP is bound at residue 345 to 348 (EISS). Ser379 serves as a coordination point for L-serine.

This sequence belongs to the class-II aminoacyl-tRNA synthetase family. Type-1 seryl-tRNA synthetase subfamily. Homodimer. The tRNA molecule binds across the dimer.

The protein resides in the cytoplasm. It carries out the reaction tRNA(Ser) + L-serine + ATP = L-seryl-tRNA(Ser) + AMP + diphosphate + H(+). The enzyme catalyses tRNA(Sec) + L-serine + ATP = L-seryl-tRNA(Sec) + AMP + diphosphate + H(+). The protein operates within aminoacyl-tRNA biosynthesis; selenocysteinyl-tRNA(Sec) biosynthesis; L-seryl-tRNA(Sec) from L-serine and tRNA(Sec): step 1/1. Catalyzes the attachment of serine to tRNA(Ser). Is also able to aminoacylate tRNA(Sec) with serine, to form the misacylated tRNA L-seryl-tRNA(Sec), which will be further converted into selenocysteinyl-tRNA(Sec). The protein is Serine--tRNA ligase (serS1) of Methanosarcina barkeri (strain Fusaro / DSM 804).